Here is a 471-residue protein sequence, read N- to C-terminus: dTDP-4-dehydro-6-deoxy-alpha-D-glucopyranose 2,3-dehydratase (471 aa).

DTDP-4-dehydro-6-deoxy-alpha-D-glucose is bound by residues Trp-67, 155-159, Ser-193, Asn-238, Trp-288, Arg-351, 367-369, 372-373, and 405-408; these read TRSNY, QCT, NY, and EGGR.

It belongs to the hexose 2,3-dehydratase family. In terms of assembly, homodimer.

The catalysed reaction is dTDP-4-dehydro-6-deoxy-alpha-D-glucose = dTDP-3,4-didehydro-2,6-dideoxy-alpha-D-glucose + H2O. Its pathway is antibiotic biosynthesis. Involved in the biosynthesis of the 2,3,6-trideoxysugar L-epivancosamine, the terminal sugar added to the aglycone scaffold of chloroeremomycin, a member of the glycopeptide antibiotics vancomycin family. Catalyzes the removal of the hydroxyl group at position C-2 of the hexose ring of dTDP-4-dehydro-6-deoxy-alpha-D-glucopyranose, and the oxidation of the hydroxyl group at position C-3 to form a carbonyl functionality. The product of the reaction, dTDP-2,6-dideoxy-D-glycero-hex-2-enos-4-ulose, is a highly unstable diketosugar, which spontaneously forms dTDP-3,4-didehydro-2,6-dideoxy-alpha-D-glucose. In Amycolatopsis orientalis (Nocardia orientalis), this protein is dTDP-4-dehydro-6-deoxy-alpha-D-glucopyranose 2,3-dehydratase.